The following is a 402-amino-acid chain: Uroporphyrinogen decarboxylase 1, chloroplastic (402 aa).

A chloroplast-targeting transit peptide spans 1–50; that stretch reads MISATATAAFLAAAPASSSSCTTHRRRSGLPAISASLATASSTEEPLLVR. Residues 67 to 71, F86, S116, D117, Y193, S248, and H363 each bind substrate; that span reads RQAGR.

This sequence belongs to the uroporphyrinogen decarboxylase family. In terms of assembly, homodimer.

The protein localises to the plastid. Its subcellular location is the chloroplast. The catalysed reaction is uroporphyrinogen III + 4 H(+) = coproporphyrinogen III + 4 CO2. Its pathway is porphyrin-containing compound metabolism; protoporphyrin-IX biosynthesis; coproporphyrinogen-III from 5-aminolevulinate: step 4/4. Functionally, catalyzes the decarboxylation of four acetate groups of uroporphyrinogen-III to yield coproporphyrinogen-III. This Oryza sativa subsp. japonica (Rice) protein is Uroporphyrinogen decarboxylase 1, chloroplastic.